Consider the following 444-residue polypeptide: Glutamate--tRNA ligase 2 (444 aa).

The 'HIGH' region signature appears at 7–17; sequence PSPTGYLHVGN. Residues 240-244 carry the 'KMSKS' region motif; sequence KLSKR. K243 contributes to the ATP binding site.

Belongs to the class-I aminoacyl-tRNA synthetase family. Glutamate--tRNA ligase type 1 subfamily. Monomer.

It localises to the cytoplasm. It catalyses the reaction tRNA(Glu) + L-glutamate + ATP = L-glutamyl-tRNA(Glu) + AMP + diphosphate. Its function is as follows. Catalyzes the attachment of glutamate to tRNA(Glu) in a two-step reaction: glutamate is first activated by ATP to form Glu-AMP and then transferred to the acceptor end of tRNA(Glu). The chain is Glutamate--tRNA ligase 2 from Gluconobacter oxydans (strain 621H) (Gluconobacter suboxydans).